The primary structure comprises 257 residues: UPF0246 protein A1S_2267 (257 aa).

The protein belongs to the UPF0246 family.

This is UPF0246 protein A1S_2267 from Acinetobacter baumannii (strain ATCC 17978 / DSM 105126 / CIP 53.77 / LMG 1025 / NCDC KC755 / 5377).